The chain runs to 263 residues: Tryptophan synthase alpha chain (263 aa).

Catalysis depends on proton acceptor residues Glu49 and Asp60.

The protein belongs to the TrpA family. In terms of assembly, tetramer of two alpha and two beta chains.

It carries out the reaction (1S,2R)-1-C-(indol-3-yl)glycerol 3-phosphate + L-serine = D-glyceraldehyde 3-phosphate + L-tryptophan + H2O. It participates in amino-acid biosynthesis; L-tryptophan biosynthesis; L-tryptophan from chorismate: step 5/5. In terms of biological role, the alpha subunit is responsible for the aldol cleavage of indoleglycerol phosphate to indole and glyceraldehyde 3-phosphate. The polypeptide is Tryptophan synthase alpha chain (Cereibacter sphaeroides (strain ATCC 17025 / ATH 2.4.3) (Rhodobacter sphaeroides)).